Reading from the N-terminus, the 428-residue chain is Serine--tRNA ligase (428 aa).

231-233 lines the L-serine pocket; the sequence is TAE. 262–264 provides a ligand contact to ATP; sequence RSE. Position 285 (glutamate 285) interacts with L-serine. An ATP-binding site is contributed by 349-352; the sequence is EISS. Serine 385 contributes to the L-serine binding site.

Belongs to the class-II aminoacyl-tRNA synthetase family. Type-1 seryl-tRNA synthetase subfamily. Homodimer. The tRNA molecule binds across the dimer.

The protein localises to the cytoplasm. The catalysed reaction is tRNA(Ser) + L-serine + ATP = L-seryl-tRNA(Ser) + AMP + diphosphate + H(+). It catalyses the reaction tRNA(Sec) + L-serine + ATP = L-seryl-tRNA(Sec) + AMP + diphosphate + H(+). Its pathway is aminoacyl-tRNA biosynthesis; selenocysteinyl-tRNA(Sec) biosynthesis; L-seryl-tRNA(Sec) from L-serine and tRNA(Sec): step 1/1. Catalyzes the attachment of serine to tRNA(Ser). Is also able to aminoacylate tRNA(Sec) with serine, to form the misacylated tRNA L-seryl-tRNA(Sec), which will be further converted into selenocysteinyl-tRNA(Sec). The sequence is that of Serine--tRNA ligase from Staphylococcus aureus (strain Mu3 / ATCC 700698).